Reading from the N-terminus, the 217-residue chain is Probable transaldolase (217 aa).

The active-site Schiff-base intermediate with substrate is the K83.

Belongs to the transaldolase family. Type 3B subfamily.

The protein localises to the cytoplasm. It carries out the reaction D-sedoheptulose 7-phosphate + D-glyceraldehyde 3-phosphate = D-erythrose 4-phosphate + beta-D-fructose 6-phosphate. The protein operates within carbohydrate degradation; pentose phosphate pathway; D-glyceraldehyde 3-phosphate and beta-D-fructose 6-phosphate from D-ribose 5-phosphate and D-xylulose 5-phosphate (non-oxidative stage): step 2/3. In terms of biological role, transaldolase is important for the balance of metabolites in the pentose-phosphate pathway. This Bartonella bacilliformis (strain ATCC 35685 / KC583 / Herrer 020/F12,63) protein is Probable transaldolase.